A 22-amino-acid polypeptide reads, in one-letter code: Brevinin-1OKa (22 aa).

Residue lysine 22 is modified to Lysine amide.

As to expression, expressed by the skin glands.

The protein resides in the secreted. In terms of biological role, antimicrobial peptide. Active against Gram-negative bacterium E.coli (MIC=12.5 uM) and against Gram-positive bacterium S.aureus (MIC=12.5 uM). The sequence is that of Brevinin-1OKa from Nidirana okinavana (Kampira Falls frog).